Consider the following 278-residue polypeptide: Alcohol dehydrogenase-related 31 kDa protein (278 aa).

11-34 (YVADCGGIALETSKVLMTKNIAKL) is an NAD(+) binding site. Ser-139 contacts substrate. The active-site Proton acceptor is the Tyr-152.

Belongs to the short-chain dehydrogenases/reductases (SDR) family.

This chain is Alcohol dehydrogenase-related 31 kDa protein (Adhr), found in Drosophila pseudoobscura pseudoobscura (Fruit fly).